Reading from the N-terminus, the 291-residue chain is Pyridoxal 5'-phosphate synthase subunit PdxS (291 aa).

Asp-23 contributes to the D-ribose 5-phosphate binding site. Lys-80 serves as the catalytic Schiff-base intermediate with D-ribose 5-phosphate. Gly-152 contributes to the D-ribose 5-phosphate binding site. D-glyceraldehyde 3-phosphate is bound at residue Arg-164. D-ribose 5-phosphate-binding positions include Gly-213 and Gly-234–Ser-235.

Belongs to the PdxS/SNZ family. In the presence of PdxT, forms a dodecamer of heterodimers.

It carries out the reaction aldehydo-D-ribose 5-phosphate + D-glyceraldehyde 3-phosphate + L-glutamine = pyridoxal 5'-phosphate + L-glutamate + phosphate + 3 H2O + H(+). It participates in cofactor biosynthesis; pyridoxal 5'-phosphate biosynthesis. In terms of biological role, catalyzes the formation of pyridoxal 5'-phosphate from ribose 5-phosphate (RBP), glyceraldehyde 3-phosphate (G3P) and ammonia. The ammonia is provided by the PdxT subunit. Can also use ribulose 5-phosphate and dihydroxyacetone phosphate as substrates, resulting from enzyme-catalyzed isomerization of RBP and G3P, respectively. The chain is Pyridoxal 5'-phosphate synthase subunit PdxS from Haemophilus influenzae (strain PittGG).